The primary structure comprises 387 residues: UDP-Gal:alpha-D-GlcNAc-diphosphoundecaprenol alpha-1,3-galactosyltransferase (387 aa).

Belongs to the glycosyltransferase group 1 family. Glycosyltransferase 4 subfamily. Mg(2+) is required as a cofactor. Mn(2+) serves as cofactor. Requires Fe(2+) as cofactor.

It catalyses the reaction N-acetyl-alpha-D-glucosaminyl-di-trans,octa-cis-undecaprenyl diphosphate + UDP-alpha-D-galactose = alpha-D-Gal-(1-&gt;3)-alpha-D-GlcNAc-di-trans,octa-cis-undecaprenyl diphosphate + UDP + H(+). Its pathway is bacterial outer membrane biogenesis; LPS O-antigen biosynthesis. Involved in the biosynthesis of the lipopolysaccharide (LPS) O-antigen region. Catalyzes the transfer of galactose from UDP-galactose to GlcNAc-undecaprenyl diphosphate via an alpha1,3-linkage. Has strict substrate specificity. The sequence is that of UDP-Gal:alpha-D-GlcNAc-diphosphoundecaprenol alpha-1,3-galactosyltransferase from Escherichia coli.